The sequence spans 271 residues: Thymidine kinase (271 aa).

ATP is bound by residues 74–81 (GPMFAGKT) and 152–155 (DEAQ). The active-site Proton acceptor is E153. Position 184 (Y184) interacts with substrate. Zn(2+) contacts are provided by C209 and C212. Y237 is a binding site for substrate. C241 contacts Zn(2+).

It belongs to the thymidine kinase family.

It carries out the reaction thymidine + ATP = dTMP + ADP + H(+). The chain is Thymidine kinase (TK) from Oryza sativa subsp. japonica (Rice).